The chain runs to 283 residues: Alkaline ceramidase (283 aa).

Residues aspartate 28, tryptophan 29, glutamate 31, asparagine 33, and glutamate 42 each contribute to the Ca(2+) site. The next 2 membrane-spanning stretches (helical) occupy residues 43–63 (FVNT…IMLF) and 69–89 (FVTP…LSSM). Position 92 (histidine 92) interacts with Zn(2+). 4 helical membrane-spanning segments follow: residues 98-118 (IGQL…FSLF), 134-151 (TFSW…GLSW), 154-174 (PIVN…MLYT), and 187-209 (LGIR…RIFC). 2 residues coordinate Zn(2+): histidine 221 and histidine 225. A helical transmembrane segment spans residues 222–242 (GFWHIFIFIAAYTVLVLFAYF).

Belongs to the alkaline ceramidase family. Requires Zn(2+) as cofactor. In terms of tissue distribution, expressed in the central midgut of late embryos. In brain, it is present at the interhemispheric junction and in groups of cells in the central brain.

It localises to the membrane. It catalyses the reaction an N-acylsphing-4-enine + H2O = sphing-4-enine + a fatty acid. In terms of biological role, hydrolyzes the sphingolipid ceramide into sphingosine and free fatty acid. The sequence is that of Alkaline ceramidase (bwa) from Drosophila melanogaster (Fruit fly).